The following is a 376-amino-acid chain: Aspartate-semialdehyde dehydrogenase (376 aa).

Residues 11–14 (RGMV), 38–39 (TS), and Q74 contribute to the NADP(+) site. Residue R103 coordinates phosphate. C136 acts as the Acyl-thioester intermediate in catalysis. Q163 serves as a coordination point for substrate. Residues 166–167 (SG) and P194 each bind NADP(+). E242 is a substrate binding site. Phosphate is bound at residue K245. R273 provides a ligand contact to substrate. H280 functions as the Proton acceptor in the catalytic mechanism. Residue Q356 coordinates NADP(+).

It belongs to the aspartate-semialdehyde dehydrogenase family. Homodimer.

The enzyme catalyses L-aspartate 4-semialdehyde + phosphate + NADP(+) = 4-phospho-L-aspartate + NADPH + H(+). Its pathway is amino-acid biosynthesis; L-lysine biosynthesis via DAP pathway; (S)-tetrahydrodipicolinate from L-aspartate: step 2/4. It functions in the pathway amino-acid biosynthesis; L-methionine biosynthesis via de novo pathway; L-homoserine from L-aspartate: step 2/3. It participates in amino-acid biosynthesis; L-threonine biosynthesis; L-threonine from L-aspartate: step 2/5. Its function is as follows. Catalyzes the NADPH-dependent formation of L-aspartate-semialdehyde (L-ASA) by the reductive dephosphorylation of L-aspartyl-4-phosphate. The sequence is that of Aspartate-semialdehyde dehydrogenase from Bordetella pertussis (strain Tohama I / ATCC BAA-589 / NCTC 13251).